Here is a 61-residue protein sequence, read N- to C-terminus: Small ribosomal subunit protein uS14B (61 aa).

Residues C24, C27, C40, and C43 each coordinate Zn(2+).

This sequence belongs to the universal ribosomal protein uS14 family. Zinc-binding uS14 subfamily. As to quaternary structure, part of the 30S ribosomal subunit. Contacts proteins S3 and S10. It depends on Zn(2+) as a cofactor.

Functionally, binds 16S rRNA, required for the assembly of 30S particles and may also be responsible for determining the conformation of the 16S rRNA at the A site. In Shouchella clausii (strain KSM-K16) (Alkalihalobacillus clausii), this protein is Small ribosomal subunit protein uS14B.